Consider the following 640-residue polypeptide: Threonine--tRNA ligase (640 aa).

Residues 1 to 63 (MSSVTVTLPD…SEDCEIEIVT (63 aa)) enclose the TGS domain. A catalytic region spans residues 242–533 (DHRKLGREMD…LIEHYNGRFP (292 aa)). Zn(2+) is bound by residues cysteine 334, histidine 385, and histidine 510.

It belongs to the class-II aminoacyl-tRNA synthetase family. Homodimer. Zn(2+) is required as a cofactor.

The protein resides in the cytoplasm. The catalysed reaction is tRNA(Thr) + L-threonine + ATP = L-threonyl-tRNA(Thr) + AMP + diphosphate + H(+). Catalyzes the attachment of threonine to tRNA(Thr) in a two-step reaction: L-threonine is first activated by ATP to form Thr-AMP and then transferred to the acceptor end of tRNA(Thr). The sequence is that of Threonine--tRNA ligase from Halobacterium salinarum (strain ATCC 29341 / DSM 671 / R1).